The following is a 218-amino-acid chain: N-(5'-phosphoribosyl)anthranilate isomerase (218 aa).

This sequence belongs to the TrpF family.

The enzyme catalyses N-(5-phospho-beta-D-ribosyl)anthranilate = 1-(2-carboxyphenylamino)-1-deoxy-D-ribulose 5-phosphate. It participates in amino-acid biosynthesis; L-tryptophan biosynthesis; L-tryptophan from chorismate: step 3/5. This Halalkalibacterium halodurans (strain ATCC BAA-125 / DSM 18197 / FERM 7344 / JCM 9153 / C-125) (Bacillus halodurans) protein is N-(5'-phosphoribosyl)anthranilate isomerase.